The primary structure comprises 216 residues: Splicing factor U2AF 23 kDa subunit (216 aa).

The segment at 12–40 (EQDKVNCSFYYKIGACRHGERCSRKHVKP) adopts a C3H1-type 1 zinc-finger fold. The RRM domain maps to 44–141 (QTILCPNMYK…RPVYAELSPV (98 aa)). The C3H1-type 2 zinc-finger motif lies at 143–170 (DFREACCRQHETSECQRGGLCNFMHAKK). Positions 194–216 (EMKKEPNSDSTNRWVSVTAERKN) are disordered.

As to quaternary structure, forms a heterodimer with the U2AF large subunit. Can also form a homodimer. U2AF large subunit (U2AF59), U2AF small subunit (U2AF23) and SF1 (bpb1) interact to form a complex required for complex A formation. Interacts with cwf13.

The protein localises to the nucleus. Necessary for the splicing of pre-mRNA. The SF1-U2AF59-U2AF23 complex has a role in the recognition of the branch site (5'-UACUAAC-3'), the pyrimidine tract and the 3'-splice site at the 3'-end of introns. The chain is Splicing factor U2AF 23 kDa subunit from Schizosaccharomyces pombe (strain 972 / ATCC 24843) (Fission yeast).